A 535-amino-acid polypeptide reads, in one-letter code: EGF domain-specific O-linked N-acetylglucosamine transferase (535 aa).

The signal sequence occupies residues 1-16 (MFILLMFVLLLQEILA). N-linked (GlcNAc...) asparagine glycans are attached at residues Asn22 and Asn271. Positions 303-305 (DYD) match the Required for optimal activity motif. N-linked (GlcNAc...) asparagine glycans are attached at residues Asn362 and Asn501.

Belongs to the glycosyltransferase 61 family.

Its subcellular location is the endoplasmic reticulum lumen. The enzyme catalyses L-seryl-[protein] + UDP-N-acetyl-alpha-D-glucosamine = 3-O-(N-acetyl-beta-D-glucosaminyl)-L-seryl-[protein] + UDP + H(+). It carries out the reaction L-threonyl-[protein] + UDP-N-acetyl-alpha-D-glucosamine = 3-O-(N-acetyl-beta-D-glucosaminyl)-L-threonyl-[protein] + UDP + H(+). Its function is as follows. Catalyzes the transfer of a single N-acetylglucosamine from UDP-GlcNAc to a serine or threonine residue in extracellular proteins resulting in their modification with a beta-linked N-acetylglucosamine (O-GlcNAc). Specifically glycosylates the Thr residue located between the fifth and sixth conserved cysteines of folded EGF-like domains. The polypeptide is EGF domain-specific O-linked N-acetylglucosamine transferase (EOGT) (Gallus gallus (Chicken)).